Reading from the N-terminus, the 266-residue chain is 3-methyl-2-oxobutanoate hydroxymethyltransferase (266 aa).

The Mg(2+) site is built by aspartate 45 and aspartate 84. 3-methyl-2-oxobutanoate contacts are provided by residues aspartate 45–serine 46, aspartate 84, and lysine 112. Glutamate 114 lines the Mg(2+) pocket. Glutamate 181 functions as the Proton acceptor in the catalytic mechanism.

The protein belongs to the PanB family. In terms of assembly, homodecamer; pentamer of dimers. The cofactor is Mg(2+).

It localises to the cytoplasm. The catalysed reaction is 3-methyl-2-oxobutanoate + (6R)-5,10-methylene-5,6,7,8-tetrahydrofolate + H2O = 2-dehydropantoate + (6S)-5,6,7,8-tetrahydrofolate. The protein operates within cofactor biosynthesis; (R)-pantothenate biosynthesis; (R)-pantoate from 3-methyl-2-oxobutanoate: step 1/2. Catalyzes the reversible reaction in which hydroxymethyl group from 5,10-methylenetetrahydrofolate is transferred onto alpha-ketoisovalerate to form ketopantoate. The chain is 3-methyl-2-oxobutanoate hydroxymethyltransferase from Pseudomonas putida (strain ATCC 700007 / DSM 6899 / JCM 31910 / BCRC 17059 / LMG 24140 / F1).